A 156-amino-acid polypeptide reads, in one-letter code: S-ribosylhomocysteine lyase (156 aa).

The Fe cation site is built by His56, His60, and Cys123.

This sequence belongs to the LuxS family. As to quaternary structure, homodimer. Fe cation is required as a cofactor.

It catalyses the reaction S-(5-deoxy-D-ribos-5-yl)-L-homocysteine = (S)-4,5-dihydroxypentane-2,3-dione + L-homocysteine. Its function is as follows. Involved in the synthesis of autoinducer 2 (AI-2) which is secreted by bacteria and is used to communicate both the cell density and the metabolic potential of the environment. The regulation of gene expression in response to changes in cell density is called quorum sensing. Catalyzes the transformation of S-ribosylhomocysteine (RHC) to homocysteine (HC) and 4,5-dihydroxy-2,3-pentadione (DPD). In Staphylococcus epidermidis (strain ATCC 35984 / DSM 28319 / BCRC 17069 / CCUG 31568 / BM 3577 / RP62A), this protein is S-ribosylhomocysteine lyase.